A 69-amino-acid polypeptide reads, in one-letter code: UPF0435 protein SH1076 (69 aa).

It belongs to the UPF0435 family.

The sequence is that of UPF0435 protein SH1076 from Staphylococcus haemolyticus (strain JCSC1435).